The primary structure comprises 174 residues: ATP-dependent protease subunit HslV (174 aa).

Thr-2 is an active-site residue. Residues Gly-157, Cys-160, and Thr-163 each contribute to the Na(+) site.

Belongs to the peptidase T1B family. HslV subfamily. A double ring-shaped homohexamer of HslV is capped on each side by a ring-shaped HslU homohexamer. The assembly of the HslU/HslV complex is dependent on binding of ATP.

The protein resides in the cytoplasm. The enzyme catalyses ATP-dependent cleavage of peptide bonds with broad specificity.. Allosterically activated by HslU binding. Protease subunit of a proteasome-like degradation complex believed to be a general protein degrading machinery. The protein is ATP-dependent protease subunit HslV of Yersinia enterocolitica serotype O:8 / biotype 1B (strain NCTC 13174 / 8081).